The primary structure comprises 262 residues: Probable ketoamine kinase TTHA1179 (262 aa).

79–81 (AYL) serves as a coordination point for ATP. D172 serves as the catalytic Proton acceptor.

This sequence belongs to the fructosamine kinase family.

It catalyses the reaction N(6)-(D-ribulosyl)-L-lysine + ATP = N(6)-(3-O-phospho-D-ribulosyl)-L-lysine + ADP + H(+). It carries out the reaction N(6)-(D-erythrulosyl)-L-lysine + ATP = N(6)-(3-O-phospho-D-erythrulosyl)-L-lysine + ADP + H(+). The enzyme catalyses N(6)-D-ribulosyl-L-lysyl-[protein] + ATP = N(6)-(3-O-phospho-D-ribulosyl)-L-lysyl-[protein] + ADP + H(+). The catalysed reaction is N(6)-(D-erythrulosyl)-L-lysyl-[protein] + ATP = N(6)-(3-O-phospho-D-erythrulosyl)-L-lysyl-[protein] + ADP + H(+). In terms of biological role, ketoamine kinase that phosphorylates ketoamines, such as erythruloselysine and ribuloselysine, on the third carbon of the sugar moiety to generate ketoamine 3-phosphate. Has higher activity on free lysine (erythruloselysine and ribuloselysine), than on ribuloselysine and erythruloselysine residues on glycated proteins. The protein is Probable ketoamine kinase TTHA1179 of Thermus thermophilus (strain ATCC 27634 / DSM 579 / HB8).